A 310-amino-acid polypeptide reads, in one-letter code: MPLRLIFMGTPDFAVPTLRTLAAAGHQIVAVYSREAKPSGRGMKLQPTPVAQEAERLGIPVLTPKTLRTPEAAAEFAAFQADAAVVVAYGMILPQPILDAPTFGCFNLHGSLLPRWRGAAPINRAIMAGDPEAGVMVMKMDIGLDTGDVALTGRIALTDAMTASDLHDALAPLGAELMVEAMAQLERGELTFTKQPEQGVTYAAKIDKAEARIDWAKPAHAVLRHIHGLSPFPGAWCELPIEGEAVRVKILRCELAKGSGEPGTLLDDRLAIACGDGAIRILQLQRAGKQPMQAQDFLRGTPLQPPLAVC.

111 to 114 lines the (6S)-5,6,7,8-tetrahydrofolate pocket; sequence SLLP.

This sequence belongs to the Fmt family.

The enzyme catalyses L-methionyl-tRNA(fMet) + (6R)-10-formyltetrahydrofolate = N-formyl-L-methionyl-tRNA(fMet) + (6S)-5,6,7,8-tetrahydrofolate + H(+). Functionally, attaches a formyl group to the free amino group of methionyl-tRNA(fMet). The formyl group appears to play a dual role in the initiator identity of N-formylmethionyl-tRNA by promoting its recognition by IF2 and preventing the misappropriation of this tRNA by the elongation apparatus. The polypeptide is Methionyl-tRNA formyltransferase (Rhodopseudomonas palustris (strain BisB18)).